Consider the following 133-residue polypeptide: Phosphoribosyl-ATP pyrophosphatase (133 aa).

The disordered stretch occupies residues 1 to 22 (MGKPATKPAPKPSKQQDDKKSD).

This sequence belongs to the PRA-PH family.

The protein localises to the cytoplasm. It carries out the reaction 1-(5-phospho-beta-D-ribosyl)-ATP + H2O = 1-(5-phospho-beta-D-ribosyl)-5'-AMP + diphosphate + H(+). The protein operates within amino-acid biosynthesis; L-histidine biosynthesis; L-histidine from 5-phospho-alpha-D-ribose 1-diphosphate: step 2/9. The protein is Phosphoribosyl-ATP pyrophosphatase of Gluconobacter oxydans (strain 621H) (Gluconobacter suboxydans).